A 376-amino-acid polypeptide reads, in one-letter code: Queuine tRNA-ribosyltransferase (376 aa).

Asp-90 (proton acceptor) is an active-site residue. Residues 90 to 94 (DSGGF), Asp-144, Gln-193, and Gly-220 each bind substrate. An RNA binding region spans residues 251-257 (GVGTPED). Residue Asp-270 is the Nucleophile of the active site. The tract at residues 275–279 (TRNAR) is RNA binding; important for wobble base 34 recognition. Zn(2+)-binding residues include Cys-308, Cys-310, Cys-313, and His-339.

The protein belongs to the queuine tRNA-ribosyltransferase family. In terms of assembly, homodimer. Within each dimer, one monomer is responsible for RNA recognition and catalysis, while the other monomer binds to the replacement base PreQ1. The cofactor is Zn(2+).

It catalyses the reaction 7-aminomethyl-7-carbaguanine + guanosine(34) in tRNA = 7-aminomethyl-7-carbaguanosine(34) in tRNA + guanine. It participates in tRNA modification; tRNA-queuosine biosynthesis. In terms of biological role, catalyzes the base-exchange of a guanine (G) residue with the queuine precursor 7-aminomethyl-7-deazaguanine (PreQ1) at position 34 (anticodon wobble position) in tRNAs with GU(N) anticodons (tRNA-Asp, -Asn, -His and -Tyr). Catalysis occurs through a double-displacement mechanism. The nucleophile active site attacks the C1' of nucleotide 34 to detach the guanine base from the RNA, forming a covalent enzyme-RNA intermediate. The proton acceptor active site deprotonates the incoming PreQ1, allowing a nucleophilic attack on the C1' of the ribose to form the product. After dissociation, two additional enzymatic reactions on the tRNA convert PreQ1 to queuine (Q), resulting in the hypermodified nucleoside queuosine (7-(((4,5-cis-dihydroxy-2-cyclopenten-1-yl)amino)methyl)-7-deazaguanosine). The polypeptide is Queuine tRNA-ribosyltransferase (Cupriavidus pinatubonensis (strain JMP 134 / LMG 1197) (Cupriavidus necator (strain JMP 134))).